Reading from the N-terminus, the 57-residue chain is Potassium channel toxin alpha-KTx 8.8 (57 aa).

The signal sequence occupies residues 1–19; sequence MCRLYAIILIVLVMNVIMT. Residues 20 to 28 constitute a propeptide that is removed on maturation; that stretch reads IIPDSKVEV. Disulfide bonds link Cys-31–Cys-47, Cys-34–Cys-52, and Cys-38–Cys-54.

It belongs to the short scorpion toxin superfamily. Potassium channel inhibitor family. Alpha-KTx 08 subfamily. Contains 3 disulfide bonds. In terms of tissue distribution, expressed by the venom gland.

It localises to the secreted. In terms of biological role, selectively inhibits voltage-gated potassium channels rKv1.2/KCNA2 (IC(50)=331 nM) and hKv1.3/KCNA3 (IC(50)=503 nM). Partially inihibts rKv1.6/KCNA6 (IC(50)=9983 nM). The protein is Potassium channel toxin alpha-KTx 8.8 of Orthochirus scrobiculosus (Central Asian scorpion).